The primary structure comprises 130 residues: Small ribosomal subunit protein uS9 (130 aa).

This sequence belongs to the universal ribosomal protein uS9 family.

The sequence is that of Small ribosomal subunit protein uS9 from Ectopseudomonas mendocina (strain ymp) (Pseudomonas mendocina).